The primary structure comprises 231 residues: 2-C-methyl-D-erythritol 4-phosphate cytidylyltransferase (231 aa).

Belongs to the IspD/TarI cytidylyltransferase family. IspD subfamily.

The catalysed reaction is 2-C-methyl-D-erythritol 4-phosphate + CTP + H(+) = 4-CDP-2-C-methyl-D-erythritol + diphosphate. It participates in isoprenoid biosynthesis; isopentenyl diphosphate biosynthesis via DXP pathway; isopentenyl diphosphate from 1-deoxy-D-xylulose 5-phosphate: step 2/6. Functionally, catalyzes the formation of 4-diphosphocytidyl-2-C-methyl-D-erythritol from CTP and 2-C-methyl-D-erythritol 4-phosphate (MEP). This chain is 2-C-methyl-D-erythritol 4-phosphate cytidylyltransferase, found in Shewanella piezotolerans (strain WP3 / JCM 13877).